The sequence spans 370 residues: 3-dehydroquinate synthase (370 aa).

NAD(+) contacts are provided by residues 108–112 (GVIGD), 132–133 (TT), Lys145, and Lys154. Zn(2+) is bound by residues Glu187, His249, and His267.

The protein belongs to the sugar phosphate cyclases superfamily. Dehydroquinate synthase family. Requires Co(2+) as cofactor. The cofactor is Zn(2+). It depends on NAD(+) as a cofactor.

It localises to the cytoplasm. It catalyses the reaction 7-phospho-2-dehydro-3-deoxy-D-arabino-heptonate = 3-dehydroquinate + phosphate. The protein operates within metabolic intermediate biosynthesis; chorismate biosynthesis; chorismate from D-erythrose 4-phosphate and phosphoenolpyruvate: step 2/7. Catalyzes the conversion of 3-deoxy-D-arabino-heptulosonate 7-phosphate (DAHP) to dehydroquinate (DHQ). The sequence is that of 3-dehydroquinate synthase from Cereibacter sphaeroides (strain ATCC 17025 / ATH 2.4.3) (Rhodobacter sphaeroides).